Reading from the N-terminus, the 749-residue chain is Dynamin-1-like protein (749 aa).

Methionine 1 is subject to N-acetylmethionine. The Dynamin-type G domain maps to 22-315 (IIQLPQIVVV…LMHHIRDCLP (294 aa)). Positions 32–39 (GTQSSGKS) are G1 motif. A GTP-binding site is contributed by 32–40 (GTQSSGKSS). Residues 58 to 60 (VTR) form a G2 motif region. The interval 74 to 93 (DKRKTTGEENDPATWKNSRH) is disordered. The G3 motif stretch occupies residues 159-162 (DLPG). The tract at residues 228–231 (TKLD) is G4 motif. GTP is bound by residues 228–234 (TKLDLMD) and 259–262 (NRSQ). Residues 258-261 (VNRS) form a G5 motif region. The middle domain stretch occupies residues 357–502 (YCNTIEGTAK…NEMVHNLVAI (146 aa)). Residues 461–698 (NYSTQELLRF…NHVKDTLQSE (238 aa)) are interaction with GSK3B. The b domain stretch occupies residues 515–582 (ADACGLMNNN…IQESRRETKN (68 aa)). Positions 536 to 604 (ELPSAVSRDK…QEPTTGNWRG (69 aa)) are disordered. Serine 542 bears the Phosphoserine mark. Glycyl lysine isopeptide (Lys-Gly) (interchain with G-Cter in SUMO) cross-links involve residues lysine 545 and lysine 548. Positions 550-567 (PSALAPASQEPSPAASAE) are enriched in low complexity. Serine 561 bears the Phosphoserine mark. Positions 568-581 (ADGKLIQESRRETK) are enriched in basic and acidic residues. Glycyl lysine isopeptide (Lys-Gly) (interchain with G-Cter in SUMO) cross-links involve residues lysine 571 and lysine 581. Residues threonine 598 and threonine 599 are each glycosylated (O-linked (GlcNAc) threonine). Residue lysine 607 forms a Glycyl lysine isopeptide (Lys-Gly) (interchain with G-Cter in SUMO) linkage. At lysine 610 the chain carries N6-acetyllysine; alternate. A Glycyl lysine isopeptide (Lys-Gly) (interchain with G-Cter in SUMO); alternate cross-link involves residue lysine 610. A Glycyl lysine isopeptide (Lys-Gly) (interchain with G-Cter in SUMO) cross-link involves residue lysine 619. Serine 620 is modified (phosphoserine). Residue lysine 621 forms a Glycyl lysine isopeptide (Lys-Gly) (interchain with G-Cter in SUMO) linkage. Serine 629 carries the phosphoserine; by CDK1 and PINK1 modification. Residue serine 650 is modified to Phosphoserine; by CAMK1 and PKA. Cysteine 657 bears the S-nitrosocysteine mark. One can recognise a GED domain in the interval 657-748 (CEVIERLIKS…IIAEIRETHL (92 aa)). The tract at residues 667–681 (YFLIVRKNIQDSVPK) is important for homodimerization.

The protein belongs to the TRAFAC class dynamin-like GTPase superfamily. Dynamin/Fzo/YdjA family. In terms of assembly, homotetramer; dimerizes through the N-terminal GTP-middle region of one molecule binding to the GED domain of another DNM1L molecule. Oligomerizes in a GTP-dependent manner to form membrane-associated tubules with a spiral pattern. Interacts with GSK3B and MARCHF5. Interacts (via the GTPase and B domains) with UBE2I; the interaction promotes sumoylation of DNM1L, mainly in its B domain. Interacts with PPP3CA; the interaction dephosphorylates DNM1L and regulates its transition to mitochondria. Interacts with BCL2L1 isoform BCL-X(L) and CLTA; DNM1L and BCL2L1 isoform BCL-X(L) may form a complex in synaptic vesicles that also contains clathrin and MFF. Interacts with MFF; the interaction is inhinited by C11orf65/MFI. Interacts with FIS1. Interacts with MIEF2 and MIEF1; GTP-dependent, regulates GTP hydrolysis and DNM1L oligomerization. Interacts with PGAM5; this interaction leads to dephosphorylation at Ser-656 and activation of GTPase activity and eventually to mitochondria fragmentation. Interacts with RALBP1; during mitosis, recruits DNM1L to the mitochondrion and mediates its activation by the mitotic kinase cyclin B-CDK1. Post-translationally, phosphorylation/dephosphorylation events on two sites near the GED domain regulate mitochondrial fission. Phosphorylation on Ser-650 by CAMK1 and PKA inhibits the GTPase activity, leading to a defect in mitochondrial fission promoting mitochondrial elongation. Dephosphorylated on this site by PPP3CA which promotes mitochondrial fission. Phosphorylation on Ser-629 by CDK1 and PINK1 activates the GTPase activity and promotes mitochondrial fission. Phosphorylated in a circadian manner at Ser-650. Sumoylated on various lysine residues within the B domain, probably by MUL1. Sumoylation positively regulates mitochondrial fission. Desumoylated by SENP5 during G2/M transition of mitosis. Appears to be linked to its catalytic activity. In terms of processing, S-nitrosylation increases DNM1L dimerization, mitochondrial fission and causes neuronal damage. Post-translationally, O-GlcNAcylation augments the level of the GTP-bound active form of DNM1L and induces translocation from the cytoplasm to mitochondria in cardiomyocytes. It also decreases phosphorylation at Ser-650. Ubiquitination by MARCHF5 affects mitochondrial morphology.

It is found in the cytoplasm. It localises to the cytosol. The protein localises to the golgi apparatus. Its subcellular location is the endomembrane system. The protein resides in the mitochondrion outer membrane. It is found in the peroxisome. It localises to the membrane. The protein localises to the clathrin-coated pit. Its subcellular location is the cytoplasmic vesicle. The protein resides in the secretory vesicle. It is found in the synaptic vesicle membrane. It catalyses the reaction GTP + H2O = GDP + phosphate + H(+). In terms of biological role, functions in mitochondrial and peroxisomal division. Mediates membrane fission through oligomerization into membrane-associated tubular structures that wrap around the scission site to constrict and sever the mitochondrial membrane through a GTP hydrolysis-dependent mechanism. The specific recruitment at scission sites is mediated by membrane receptors like MFF, MIEF1 and MIEF2 for mitochondrial membranes. While the recruitment by the membrane receptors is GTP-dependent, the following hydrolysis of GTP induces the dissociation from the receptors and allows DNM1L filaments to curl into closed rings that are probably sufficient to sever a double membrane. Acts downstream of PINK1 to promote mitochondrial fission in a PRKN-dependent manner. Plays an important role in mitochondrial fission during mitosis. Through its function in mitochondrial division, ensures the survival of at least some types of postmitotic neurons, including Purkinje cells, by suppressing oxidative damage. Required for normal brain development, including that of cerebellum. Facilitates developmentally regulated apoptosis during neural tube formation. Required for a normal rate of cytochrome c release and caspase activation during apoptosis; this requirement may depend upon the cell type and the physiological apoptotic cues. Required for formation of endocytic vesicles. Proposed to regulate synaptic vesicle membrane dynamics through association with BCL2L1 isoform Bcl-X(L) which stimulates its GTPase activity in synaptic vesicles; the function may require its recruitment by MFF to clathrin-containing vesicles. Required for programmed necrosis execution. Rhythmic control of its activity following phosphorylation at Ser-650 is essential for the circadian control of mitochondrial ATP production. In Bos taurus (Bovine), this protein is Dynamin-1-like protein.